The following is a 278-amino-acid chain: Bifunctional protein FolD (278 aa).

NADP(+) is bound by residues 162-164 (GAG) and Ile228.

This sequence belongs to the tetrahydrofolate dehydrogenase/cyclohydrolase family. Homodimer.

The catalysed reaction is (6R)-5,10-methylene-5,6,7,8-tetrahydrofolate + NADP(+) = (6R)-5,10-methenyltetrahydrofolate + NADPH. It catalyses the reaction (6R)-5,10-methenyltetrahydrofolate + H2O = (6R)-10-formyltetrahydrofolate + H(+). The protein operates within one-carbon metabolism; tetrahydrofolate interconversion. Its function is as follows. Catalyzes the oxidation of 5,10-methylenetetrahydrofolate to 5,10-methenyltetrahydrofolate and then the hydrolysis of 5,10-methenyltetrahydrofolate to 10-formyltetrahydrofolate. The sequence is that of Bifunctional protein FolD from Hydrogenobaculum sp. (strain Y04AAS1).